A 727-amino-acid chain; its full sequence is Synaptic vesicle glycoprotein 2C (727 aa).

Residues 1–57 (MEDSYKDRTSLMKGAKDIAKEVKKQTVKKVNQAVDRAQDEYTQRSYSRFQDEEDDDD) form an interaction with SYT1 region. The Cytoplasmic segment spans residues 1 to 154 (MEDSYKDRTS…CGHGRFQWAL (154 aa)). The tract at residues 22-128 (VKKQTVKKVN…DRRELESERR (107 aa)) is disordered. 2 positions are modified to phosphoserine: S75 and S76. Phosphothreonine is present on T79. The span at 113 to 128 (KGDEYKDRRELESERR) shows a compositional bias: basic and acidic residues. A helical transmembrane segment spans residues 155 to 175 (FFVLGMALMADGVEVFVVGFV). The Extracellular segment spans residues 176–191 (LPSAETDLCIPNSGSG). Residues 192-212 (WLGSIVYLGMMVGAFFWGGLA) traverse the membrane as a helical segment. Topologically, residues 213–226 (DKVGRKQSLLICMS) are cytoplasmic. Residues 227–247 (VNGFFAFLSSFVQGYGFFLVC) form a helical membrane-spanning segment. R248 is a topological domain (extracellular). Residues 249–269 (LLSGFGIGGAIPTVFSYFAEV) traverse the membrane as a helical segment. Residues 270–280 (LAREKRGEHLS) lie on the Cytoplasmic side of the membrane. The helical transmembrane segment at 281-301 (WLCMFWMIGGIYASAMAWAII) threads the bilayer. The Extracellular segment spans residues 302 to 320 (PHYGWSFSMGSAYQFHSWR). Residues 321-341 (VFVIVCALPCVSSVVALTFMP) traverse the membrane as a helical segment. At 342-437 (ESPRFLLEVG…PVRENTIKLT (96 aa)) the chain is on the cytoplasmic side. A helical membrane pass occupies residues 438-458 (IVWFTLSFGYYGLSVWFPDVI). Residues 459-578 (KHLQSDEYAL…CQITFDDDYS (120 aa)) lie on the Extracellular side of the membrane. Y466 is subject to Phosphotyrosine. 5 N-linked (GlcNAc...) asparagine glycosylation sites follow: N480, N484, N534, N559, and N565. The chain crosses the membrane as a helical span at residues 579–599 (AYWIYFVNFLGTLAVLPGNIV). The Cytoplasmic segment spans residues 600 to 609 (SALLMDRIGR). Residues 610-630 (LTMLGGSMVLSGISCFFLWFG) form a helical membrane-spanning segment. The Extracellular segment spans residues 631–636 (TSESMM). A helical transmembrane segment spans residues 637–657 (IGMLCLYNGLTISAWNSLDVV). Over 658-670 (TVELYPTDRRATG) the chain is Cytoplasmic. A helical transmembrane segment spans residues 671-693 (FGFLNALCKAAAVLGNLIFGSLV). Over 694 to 697 (SITK) the chain is Extracellular. A helical transmembrane segment spans residues 698-716 (AIPILLASTVLVCGGLVGL). The Cytoplasmic portion of the chain corresponds to 717–727 (RLPDTRTQVLM).

The protein belongs to the major facilitator superfamily. Interacts with SYT1 in a calcium-dependent manner. As to quaternary structure, (Microbial infection) Interacts with C.botulinum neurotoxin type A (BoNT/A, botA). In terms of assembly, (Microbial infection) Interacts with C.botulinum neurotoxin type D (BoNT/D, botD). Post-translationally, N-glycosylated. As to expression, expressed in specific subsets of conventional synapses in the retina (at protein level). Expressed in diaphragm motor nerve terminals (at protein level). Expressed in a subset of hippocampus neurons (at protein level).

The protein localises to the cytoplasmic vesicle. It localises to the secretory vesicle. It is found in the synaptic vesicle membrane. Plays a role in the control of regulated secretion in neural and endocrine cells, enhancing selectively low-frequency neurotransmission. Positively regulates vesicle fusion by maintaining the readily releasable pool of secretory vesicles. In terms of biological role, (Microbial infection) Receptor for C.botulinum neurotoxin type A (BoNT/A, botA); the toxin binds Sv2c via extracellular loop 4. Functionally, (Microbial infection) Possible receptor for C.botulinum neurotoxin type D (BoNT/D, botD). The polypeptide is Synaptic vesicle glycoprotein 2C (Sv2c) (Mus musculus (Mouse)).